Consider the following 283-residue polypeptide: Tetraspanin-33 (283 aa).

The Cytoplasmic segment spans residues 1–24; sequence MARRPGVPAAYGDEFSFVSPLVKY. A helical membrane pass occupies residues 25-45; the sequence is LLFFFNMLFWVISMVMVAVGV. The Extracellular portion of the chain corresponds to 46-64; that stretch reads YARLMKHAEAALACLAVDP. The chain crosses the membrane as a helical span at residues 65-85; the sequence is AILLIVVGVLMFLLTFCGCIG. Residues 86–96 are Cytoplasmic-facing; it reads SLRENICLLQT. The helical transmembrane segment at 97-117 threads the bilayer; sequence FSLCLTIVFLLQLAAGILGFV. Residues 118-235 lie on the Extracellular side of the membrane; sequence FSDKARGKVS…DKLVNWIHSN (118 aa). 4 disulfides stabilise this stretch: C156-C224, C157-C189, C173-C183, and C190-C203. N-linked (GlcNAc...) asparagine glycosylation occurs at N172. Residues 236-256 traverse the membrane as a helical segment; it reads LFLLGGVALGLAIPQLVGILL. Over 257–283 the chain is Cytoplasmic; that stretch reads SQVLVNQIKDQIKLQLYNQQHRADPWY.

It belongs to the tetraspanin (TM4SF) family. As to quaternary structure, homodimer; disulfide-linked. Interacts (via extracellular domain) with ADAM10 (via extracellular domain). Interacts (via cytoplasmic domain) with PLEKHA7 (via WW domains); the interaction is dependent on PDZD11 being bound to PLEKHA7 and facilitates the docking of ADAM10 to zonula adherens. In terms of tissue distribution, predominantly expressed in erythroblasts.

Its subcellular location is the cell membrane. The protein localises to the cell junction. It localises to the adherens junction. It is found in the cytoplasm. In terms of biological role, part of TspanC8 subgroup, composed of 6 members that interact with the transmembrane metalloprotease ADAM10. This interaction is required for ADAM10 exit from the endoplasmic reticulum and for enzymatic maturation and trafficking to the cell surface as well as substrate specificity. Different TspanC8/ADAM10 complexes have distinct substrates. Plays an important role in normal erythropoiesis. It has a role in the differentiation of erythroid progenitors. Negatively regulates ligand-induced Notch activity probably by regulating ADAM10 activity. Mediates docking of ADAM10 to zonula adherens by interacting with ADAM10 and, in a PDZD11-dependent manner, with the zonula adherens protein PLEKHA7. The protein is Tetraspanin-33 (Tspan33) of Mus musculus (Mouse).